Here is a 1013-residue protein sequence, read N- to C-terminus: Putative helicase mov-10-B.1 (1013 aa).

2 stretches are compositionally biased toward polar residues: residues 91-103 and 113-123; these read QWSR…QNHA and RPSTTRVSDPS. The disordered stretch occupies residues 91 to 129; the sequence is QWSRPYRSQQNHATPHLNDAISRPSTTRVSDPSSVPEPE. 550 to 557 contributes to the ATP binding site; the sequence is GPPGTGKT. Residues 672-675 carry the DEAG box motif; that stretch reads DEAG.

Belongs to the DNA2/NAM7 helicase family. SDE3 subfamily.

Its subcellular location is the cytoplasm. The protein resides in the P-body. The enzyme catalyses ATP + H2O = ADP + phosphate + H(+). In terms of biological role, probable RNA helicase. Required for RNA-mediated gene silencing by the RNA-induced silencing complex (RISC). Required for both miRNA-mediated translational repression and miRNA-mediated cleavage of complementary mRNAs by RISC. This is Putative helicase mov-10-B.1 (mov10b.1) from Danio rerio (Zebrafish).